The following is a 208-amino-acid chain: Uridine kinase (208 aa).

Residue Gly12–Thr19 coordinates ATP.

This sequence belongs to the uridine kinase family.

It localises to the cytoplasm. The enzyme catalyses uridine + ATP = UMP + ADP + H(+). It carries out the reaction cytidine + ATP = CMP + ADP + H(+). It participates in pyrimidine metabolism; CTP biosynthesis via salvage pathway; CTP from cytidine: step 1/3. The protein operates within pyrimidine metabolism; UMP biosynthesis via salvage pathway; UMP from uridine: step 1/1. The polypeptide is Uridine kinase (Streptococcus equi subsp. equi (strain 4047)).